A 67-amino-acid chain; its full sequence is Large ribosomal subunit protein bL35 (67 aa).

Basic residues predominate over residues 1 to 16 (MPKMKTKSGAKKRFRV). The tract at residues 1–24 (MPKMKTKSGAKKRFRVRPGGTVKR) is disordered.

It belongs to the bacterial ribosomal protein bL35 family.

The polypeptide is Large ribosomal subunit protein bL35 (Polaromonas naphthalenivorans (strain CJ2)).